The following is a 220-amino-acid chain: Small ribosomal subunit protein mS42 (220 aa).

It belongs to the mitochondrion-specific ribosomal protein mS42 family. Component of the mitochondrial small ribosomal subunit (mt-SSU). Mature yeast 74S mitochondrial ribosomes consist of a small (37S) and a large (54S) subunit. The 37S small subunit contains a 15S ribosomal RNA (15S mt-rRNA) and at least 32 different proteins. The 54S large subunit contains a 21S rRNA (21S mt-rRNA) and at least 45 different proteins. mS43 forms a dimer with mS42, building a large protuberance adjacent to the mRNA channel exit in the mt-SSU body.

The protein localises to the mitochondrion. Functionally, component of the mitochondrial ribosome (mitoribosome), a dedicated translation machinery responsible for the synthesis of mitochondrial genome-encoded proteins, including at least some of the essential transmembrane subunits of the mitochondrial respiratory chain. The mitoribosomes are attached to the mitochondrial inner membrane and translation products are cotranslationally integrated into the membrane. This is Small ribosomal subunit protein mS42 from Schizosaccharomyces pombe (strain 972 / ATCC 24843) (Fission yeast).